Here is a 313-residue protein sequence, read N- to C-terminus: Epoxide hydrolase 1 (313 aa).

The AB hydrolase-1 domain occupies 25-299 (PAVLFLHGFP…AAHFINQEKA (275 aa)). The active-site Nucleophile is the Asp-100. Tyr-149 is an an epoxide binding site. Tyr-227 functions as the Proton donor in the catalytic mechanism. The active-site Proton acceptor is His-292.

It belongs to the AB hydrolase superfamily. Epoxide hydrolase family. Homodimer. Highly expressed in fruits 15 days after anthesis (15-DAA).

It catalyses the reaction an epoxide + H2O = an ethanediol. The catalysed reaction is (24S)-24,25-epoxycucurbitadienol + H2O = (24R)-24,25-dihydroxycucurbitadienol. Its pathway is secondary metabolite biosynthesis; terpenoid biosynthesis. In terms of biological role, epoxide hydrolase involved in the biosynthesis of cucurbitacin and mogroside tetracyclic triterpene natural products (e.g. siamenoside I and mogrosides IV, V and VI). Cucurbitacins have cytotoxic properties and exhibit deterrent taste as a defense barrier against herbivores. Mogrosides are nonsugar highly oxygenated compounds used as high-intensity zero-calorie sweeteners; they also possess pharmacological properties such as regulating immunity, lowering blood sugar and lipid levels, protecting the liver, and acting as antioxidants and antitumor agents. Catalyzes the hydrolysis of aromatic epoxide-containing substrates, such as the conversion of 24,25-epoxycucurbitadienol to 24,25-dihydroxycucurbitadienol. The sequence is that of Epoxide hydrolase 1 from Siraitia grosvenorii (Monk's fruit).